We begin with the raw amino-acid sequence, 145 residues long: 3-dehydroquinate dehydratase (145 aa).

The active-site Proton acceptor is the Y24. Positions 75, 81, and 88 each coordinate substrate. The active-site Proton donor is H101. Residues 102–103 (LS) and R112 contribute to the substrate site.

This sequence belongs to the type-II 3-dehydroquinase family. In terms of assembly, homododecamer.

The catalysed reaction is 3-dehydroquinate = 3-dehydroshikimate + H2O. It functions in the pathway metabolic intermediate biosynthesis; chorismate biosynthesis; chorismate from D-erythrose 4-phosphate and phosphoenolpyruvate: step 3/7. In terms of biological role, catalyzes a trans-dehydration via an enolate intermediate. The polypeptide is 3-dehydroquinate dehydratase (Phenylobacterium zucineum (strain HLK1)).